Reading from the N-terminus, the 428-residue chain is Aspartic protease 10 (428 aa).

Positions 1-16 are cleaved as a signal peptide; the sequence is MKTFIALLALLTVVSA. In terms of domain architecture, Peptidase A1 spans 72–425; the sequence is YMVQISLGSP…DMKSGRLGLA (354 aa). D90 is an active-site residue. N-linked (GlcNAc...) asparagine glycosylation is found at N155 and N191. D318 is an active-site residue. Residues C353 and C385 are joined by a disulfide bond.

This sequence belongs to the peptidase A1 family. Proteolytically cleaved. As to expression, synthesized in the intestine. When secreted in low heme conditions, localizes to neurons near the anterior and posterior regions of the body and in coelomocytes.

The protein localises to the secreted. Its function is as follows. Aspartic protease which plays a role in heme homeostasis and mediates inter-organ signaling between the intestine and extra-intestinal tissues when cellular heme levels are low. This is Aspartic protease 10 from Caenorhabditis elegans.